Consider the following 29-residue polypeptide: Small toxic protein ZorO (29 aa).

The helical transmembrane segment at 10 to 27 (VLIAVLELLVALLRLIDL) threads the bilayer.

The protein resides in the cell inner membrane. Functionally, toxic component of a type I toxin-antitoxin (TA) system. Expression in the absence of its cognate antitoxin (small sRNA orzO) leads to cell stasis and a decrease in colony-forming units. Repression of ZorO toxicity requires base pairing between zorO mRNA and sRNA OrzO, as well as RNase III (rnc), suggesting the mRNA is degraded. Base pairing occurs between 18 bases in the 5' UTR of zorO mRNA and the 5' end of OrzO sRNA. sRNA OrzP, which differs only in 4 of these 18 bases, does not repress ZorO toxicity. Integration of the protein into the inner membrane damages membrane integrity and affects membrane potential. It leads to increased levels of hydroxyl radicals. The chain is Small toxic protein ZorO from Escherichia coli O157:H7.